An 89-amino-acid polypeptide reads, in one-letter code: Small ribosomal subunit protein uS15 (89 aa).

Belongs to the universal ribosomal protein uS15 family. As to quaternary structure, part of the 30S ribosomal subunit. Forms a bridge to the 50S subunit in the 70S ribosome, contacting the 23S rRNA.

Functionally, one of the primary rRNA binding proteins, it binds directly to 16S rRNA where it helps nucleate assembly of the platform of the 30S subunit by binding and bridging several RNA helices of the 16S rRNA. Forms an intersubunit bridge (bridge B4) with the 23S rRNA of the 50S subunit in the ribosome. This is Small ribosomal subunit protein uS15 from Zymomonas mobilis subsp. mobilis (strain ATCC 31821 / ZM4 / CP4).